The sequence spans 138 residues: Large ribosomal subunit protein uL16 (138 aa).

This sequence belongs to the universal ribosomal protein uL16 family. Part of the 50S ribosomal subunit.

Binds 23S rRNA and is also seen to make contacts with the A and possibly P site tRNAs. This chain is Large ribosomal subunit protein uL16, found in Corynebacterium kroppenstedtii (strain DSM 44385 / JCM 11950 / CIP 105744 / CCUG 35717).